The chain runs to 383 residues: S-adenosylmethionine synthase (383 aa).

His22 contributes to the ATP binding site. Asp24 contributes to the Mg(2+) binding site. Glu50 serves as a coordination point for K(+). L-methionine contacts are provided by Glu63 and Gln99. The segment at 99-109 (QSSEINQAVQS) is flexible loop. ATP contacts are provided by residues 160–162 (DMK), Asp235, 241–242 (RK), Ser258, and Lys262. An L-methionine-binding site is contributed by Asp235. Lys266 contributes to the L-methionine binding site.

The protein belongs to the AdoMet synthase family. In terms of assembly, homotetramer; dimer of dimers. Mg(2+) is required as a cofactor. Requires K(+) as cofactor.

The protein localises to the cytoplasm. It catalyses the reaction L-methionine + ATP + H2O = S-adenosyl-L-methionine + phosphate + diphosphate. It participates in amino-acid biosynthesis; S-adenosyl-L-methionine biosynthesis; S-adenosyl-L-methionine from L-methionine: step 1/1. In terms of biological role, catalyzes the formation of S-adenosylmethionine (AdoMet) from methionine and ATP. The overall synthetic reaction is composed of two sequential steps, AdoMet formation and the subsequent tripolyphosphate hydrolysis which occurs prior to release of AdoMet from the enzyme. The polypeptide is S-adenosylmethionine synthase (Mycoplasma pneumoniae (strain ATCC 29342 / M129 / Subtype 1) (Mycoplasmoides pneumoniae)).